Reading from the N-terminus, the 228-residue chain is Isoprenyl transferase (228 aa).

The active site involves aspartate 9. Aspartate 9 lines the Mg(2+) pocket. Substrate contacts are provided by residues 10 to 13, tryptophan 14, arginine 22, histidine 26, and 54 to 56; these read GNGR and STE. The active-site Proton acceptor is asparagine 57. Residues tryptophan 58, arginine 60, arginine 175, and 181–183 each bind substrate; that span reads RMS. Glutamate 194 contributes to the Mg(2+) binding site.

This sequence belongs to the UPP synthase family. Homodimer. It depends on Mg(2+) as a cofactor.

In terms of biological role, catalyzes the condensation of isopentenyl diphosphate (IPP) with allylic pyrophosphates generating different type of terpenoids. The chain is Isoprenyl transferase from Treponema pallidum (strain Nichols).